Reading from the N-terminus, the 431-residue chain is UDP-N-acetylglucosamine 1-carboxyvinyltransferase (431 aa).

Lysine 22–asparagine 23 is a binding site for phosphoenolpyruvate. Residue arginine 102 participates in UDP-N-acetyl-alpha-D-glucosamine binding. Cysteine 126 (proton donor) is an active-site residue. Cysteine 126 carries the 2-(S-cysteinyl)pyruvic acid O-phosphothioketal modification. Aspartate 318 and isoleucine 340 together coordinate UDP-N-acetyl-alpha-D-glucosamine.

This sequence belongs to the EPSP synthase family. MurA subfamily.

It localises to the cytoplasm. It catalyses the reaction phosphoenolpyruvate + UDP-N-acetyl-alpha-D-glucosamine = UDP-N-acetyl-3-O-(1-carboxyvinyl)-alpha-D-glucosamine + phosphate. The protein operates within cell wall biogenesis; peptidoglycan biosynthesis. Functionally, cell wall formation. Adds enolpyruvyl to UDP-N-acetylglucosamine. This Bartonella henselae (strain ATCC 49882 / DSM 28221 / CCUG 30454 / Houston 1) (Rochalimaea henselae) protein is UDP-N-acetylglucosamine 1-carboxyvinyltransferase.